Here is a 370-residue protein sequence, read N- to C-terminus: Pantothenate kinase 3 (370 aa).

The active-site Proton acceptor is glutamate 138. Residues serine 192, serine 195, and arginine 207 each contribute to the acetyl-CoA site.

This sequence belongs to the type II pantothenate kinase family. Homodimer. In terms of tissue distribution, highly expressed in the liver.

Its subcellular location is the cytoplasm. The enzyme catalyses (R)-pantothenate + ATP = (R)-4'-phosphopantothenate + ADP + H(+). It participates in cofactor biosynthesis; coenzyme A biosynthesis; CoA from (R)-pantothenate: step 1/5. With respect to regulation, subject to allosteric regulation, exists in two distinct conformational states, a catalytically incompetent (or open) conformation stabilized by the binding of acetyl(acyl)-CoA, and a catalytically competent (or closed) conformation stabilized by ATP-binding. Acetyl-CoA and its thioesters act as allosteric inhibitors and compete with the ATP-binding site. Strongly inhibited by acetyl-CoA, malonyl-CoA and palmitoyl CoA and modestly inhibited by CoA. Inhibited by calcium hopantenate. Functionally, catalyzes the phosphorylation of pantothenate to generate 4'-phosphopantothenate in the first and rate-determining step of coenzyme A (CoA) synthesis. The chain is Pantothenate kinase 3 (Pank3) from Mus musculus (Mouse).